The sequence spans 671 residues: Putative glycoside hydrolase BT_3595 (671 aa).

The N-terminal stretch at Met-1–Ala-24 is a signal peptide.

It belongs to the glycoside hydrolase-like 3 (GHL3) family.

The sequence is that of Putative glycoside hydrolase BT_3595 from Bacteroides thetaiotaomicron (strain ATCC 29148 / DSM 2079 / JCM 5827 / CCUG 10774 / NCTC 10582 / VPI-5482 / E50).